The primary structure comprises 273 residues: Putative phosphoenolpyruvate synthase regulatory protein (273 aa).

Residue 153–160 (GVSRCGKT) participates in ADP binding.

This sequence belongs to the pyruvate, phosphate/water dikinase regulatory protein family. PSRP subfamily.

The catalysed reaction is [pyruvate, water dikinase] + ADP = [pyruvate, water dikinase]-phosphate + AMP + H(+). It catalyses the reaction [pyruvate, water dikinase]-phosphate + phosphate + H(+) = [pyruvate, water dikinase] + diphosphate. In terms of biological role, bifunctional serine/threonine kinase and phosphorylase involved in the regulation of the phosphoenolpyruvate synthase (PEPS) by catalyzing its phosphorylation/dephosphorylation. The polypeptide is Putative phosphoenolpyruvate synthase regulatory protein (Pectobacterium atrosepticum (strain SCRI 1043 / ATCC BAA-672) (Erwinia carotovora subsp. atroseptica)).